A 194-amino-acid chain; its full sequence is Probable GTP-binding protein EngB (194 aa).

The region spanning 22 to 194 (DLPEYALAGR…AWQFIKEGME (173 aa)) is the EngB-type G domain. GTP-binding positions include 30–37 (GRSNVGKS), 57–61 (GKTQT), 75–78 (DVPG), 142–145 (TKAD), and 174–176 (FSS). Positions 37 and 59 each coordinate Mg(2+).

This sequence belongs to the TRAFAC class TrmE-Era-EngA-EngB-Septin-like GTPase superfamily. EngB GTPase family. Mg(2+) serves as cofactor.

Necessary for normal cell division and for the maintenance of normal septation. The sequence is that of Probable GTP-binding protein EngB from Listeria innocua serovar 6a (strain ATCC BAA-680 / CLIP 11262).